The following is a 130-amino-acid chain: MFGGGGMNPRKMQQMMEQMGIDVDELDATEVVISLDDGTEVVFSDPDVTKMDARGQETYQVLGDPVERDAADAIEAAPADDSDDTDDDDAIPQGDVDIVVQRASVPEDEAREALEAADGDLAAAIDHVDE.

Residues 6–74 (GMNPRKMQQM…PVERDAADAI (69 aa)) form the NAC-A/B domain. Residues 65 to 91 (PVERDAADAIEAAPADDSDDTDDDDAI) are disordered. The segment covering 78-90 (PADDSDDTDDDDA) has biased composition (acidic residues).

The protein belongs to the NAC-alpha family. As to quaternary structure, homodimer. Interacts with the ribosome. Binds ribosomal RNA.

Contacts the emerging nascent chain on the ribosome. The chain is Nascent polypeptide-associated complex protein from Halobacterium salinarum (strain ATCC 700922 / JCM 11081 / NRC-1) (Halobacterium halobium).